The sequence spans 64 residues: Disintegrin CV-11-beta (64 aa).

In terms of domain architecture, Disintegrin spans 1–64; it reads NSAHPCCDPV…SDCPRNPWKD (64 aa). 4 disulfides stabilise this stretch: Cys-6–Cys-29, Cys-20–Cys-26, Cys-25–Cys-50, and Cys-38–Cys-57. The short motif at 42–44 is the Cell attachment site element; the sequence is RGD.

This sequence belongs to the disintegrin family. Dimeric disintegrin subfamily. In terms of assembly, heterodimer with subunit alpha; disulfide-linked. Expressed by the venom gland.

It is found in the secreted. Its function is as follows. Inhibits ADP-induced human platelet aggregation. Antagonist of alpha-IIb/beta-3 (ITGA2B/ITGB3). This chain is Disintegrin CV-11-beta, found in Cerastes vipera (Sahara sand viper).